Reading from the N-terminus, the 614-residue chain is Asparagine synthetase [glutamine-hydrolyzing] 3 (614 aa).

Residue cysteine 2 is the For GATase activity of the active site. Positions 2–216 (CGITGWVDFK…PAHALTFSKD (215 aa)) constitute a Glutamine amidotransferase type-2 domain. L-glutamine is bound by residues 50–54 (RLAVV), 77–79 (NGE), and aspartate 102. An ATP-binding site is contributed by 377–378 (SG).

It belongs to the asparagine synthetase family.

The catalysed reaction is L-aspartate + L-glutamine + ATP + H2O = L-asparagine + L-glutamate + AMP + diphosphate + H(+). It participates in amino-acid biosynthesis; L-asparagine biosynthesis; L-asparagine from L-aspartate (L-Gln route): step 1/1. Functionally, asparagine synthetase involved in sporulation. The polypeptide is Asparagine synthetase [glutamine-hydrolyzing] 3 (asnO) (Bacillus subtilis (strain 168)).